The sequence spans 282 residues: 2-dehydro-3-deoxyphosphooctonate aldolase (282 aa).

Belongs to the KdsA family.

Its subcellular location is the cytoplasm. It catalyses the reaction D-arabinose 5-phosphate + phosphoenolpyruvate + H2O = 3-deoxy-alpha-D-manno-2-octulosonate-8-phosphate + phosphate. The protein operates within carbohydrate biosynthesis; 3-deoxy-D-manno-octulosonate biosynthesis; 3-deoxy-D-manno-octulosonate from D-ribulose 5-phosphate: step 2/3. It participates in bacterial outer membrane biogenesis; lipopolysaccharide biosynthesis. The polypeptide is 2-dehydro-3-deoxyphosphooctonate aldolase (Agrobacterium fabrum (strain C58 / ATCC 33970) (Agrobacterium tumefaciens (strain C58))).